A 179-amino-acid chain; its full sequence is Cell division protein ZapC (179 aa).

It belongs to the ZapC family. As to quaternary structure, interacts directly with FtsZ.

The protein resides in the cytoplasm. Its function is as follows. Contributes to the efficiency of the cell division process by stabilizing the polymeric form of the cell division protein FtsZ. Acts by promoting interactions between FtsZ protofilaments and suppressing the GTPase activity of FtsZ. In Tolumonas auensis (strain DSM 9187 / NBRC 110442 / TA 4), this protein is Cell division protein ZapC.